The sequence spans 216 residues: Talanin (216 aa).

As to expression, isoform 4 is expressed in placenta, lung, kidney and pancreas.

Functionally, may play a role in uric acid excretion. The polypeptide is Talanin (ZNF365) (Homo sapiens (Human)).